We begin with the raw amino-acid sequence, 519 residues long: T-box transcription factor TBX5 (519 aa).

Residues 1–43 (MADTEEAYGMPDTPVEAEPKELQCEPKQDNQMGASSKTPTSPQ) are disordered. Positions 17–28 (AEPKELQCEPKQ) are enriched in basic and acidic residues. Polar residues predominate over residues 29–43 (DNQMGASSKTPTSPQ). Positions 63 to 238 (LWLKFHEVGT…NNPFAKGFRG (176 aa)) form a DNA-binding region, T-box. Disordered regions lie at residues 254–312 (EYPV…SAYP) and 335–376 (ELSY…TESA). Over residues 262–303 (TVRQKVSSNHSPFSQETRNITGSSTLNSQYQCENGVSSTSQD) the composition is skewed to polar residues.

Monomer. Homodimer (via the T-box); binds DNA as homodimer.

Its subcellular location is the nucleus. It localises to the cytoplasm. Functionally, DNA-binding protein that regulates the transcription of several genes and is involved in heart development and limb pattern formation. May bind to the core DNA motif of promoters. The chain is T-box transcription factor TBX5 (tbx5) from Xenopus tropicalis (Western clawed frog).